Here is a 431-residue protein sequence, read N- to C-terminus: Mediator of RNA polymerase II transcription subunit 2 (431 aa).

Serine 6 carries the post-translational modification Phosphoserine. The span at 105–140 shows a compositional bias: basic and acidic residues; sequence GKEKEKEREEAEKKRAEQENMRKVREQEELKKRQEL. The tract at residues 105-178 is disordered; it reads GKEKEKEREE…ANTTDANGSK (74 aa). Over residues 143–152 the composition is skewed to low complexity; it reads ASQQQQLQQN. Residues 162–178 show a composition bias toward polar residues; that stretch reads NFSTTAPANTTDANGSK. Residue serine 208 is modified to Phosphoserine; by CDK8. The segment at 284 to 399 is disordered; it reads NNINSTKNGK…GDNPPPADNG (116 aa). The span at 304–313 shows a compositional bias: basic and acidic residues; it reads NGDEKNKNNN. Residues 318–365 show a composition bias toward low complexity; the sequence is NNNNSSEKNNNNNNNNNNNNDDNGNNNNNNSGNDNNNTTNNDSNNKNN. Over residues 366-387 the composition is skewed to polar residues; it reads SITTGNDNENIVNNDLPTTVVS.

The protein belongs to the mediator complex subunit 2 family. Component of the Mediator complex, which is composed of at least 21 subunits that form three structurally distinct submodules. The Mediator head module contains MED6, MED8, MED11, SRB4/MED17, SRB5/MED18, ROX3/MED19, SRB2/MED20 and SRB6/MED22, the middle module contains MED1, MED4, NUT1/MED5, MED7, CSE2/MED9, NUT2/MED10, SRB7/MED21 and SOH1/MED31, and the tail module contains MED2, PGD1/MED3, RGR1/MED14, GAL11/MED15 and SIN4/MED16. The head and the middle modules interact directly with RNA polymerase II, whereas the elongated tail module interacts with gene-specific regulatory proteins.

Its subcellular location is the nucleus. Component of the Mediator complex, a coactivator involved in the regulated transcription of nearly all RNA polymerase II-dependent genes. Mediator functions as a bridge to convey information from gene-specific regulatory proteins to the basal RNA polymerase II transcription machinery. The Mediator complex, having a compact conformation in its free form, is recruited to promoters by direct interactions with regulatory proteins and serves for the assembly of a functional preinitiation complex with RNA polymerase II and the general transcription factors. The Mediator complex unfolds to an extended conformation and partially surrounds RNA polymerase II, specifically interacting with the unphosphorylated form of the C-terminal domain (CTD) of RNA polymerase II. The Mediator complex dissociates from the RNA polymerase II holoenzyme and stays at the promoter when transcriptional elongation begins. The polypeptide is Mediator of RNA polymerase II transcription subunit 2 (MED2) (Saccharomyces cerevisiae (strain ATCC 204508 / S288c) (Baker's yeast)).